A 126-amino-acid chain; its full sequence is Small ribosomal subunit protein eS6 (126 aa).

Belongs to the eukaryotic ribosomal protein eS6 family.

The sequence is that of Small ribosomal subunit protein eS6 from Nanoarchaeum equitans (strain Kin4-M).